The chain runs to 486 residues: NADH-quinone oxidoreductase subunit N (486 aa).

14 helical membrane-spanning segments follow: residues 8 to 28 (LIAL…ILSI), 36 to 56 (FIAF…YFLI), 74 to 94 (ILYI…AYPW), 104 to 124 (EFYL…ISNH), 125 to 145 (MASL…LIAY), 160 to 180 (LVLS…IYAI), 204 to 224 (VLFG…MVPF), 239 to 259 (VLSF…LYFF), 270 to 290 (IFLI…LMAI), 298 to 318 (FFGY…LVSK), 329 to 349 (GIFL…INLF), 374 to 394 (ASIV…LGFF), 407 to 427 (HLWT…YGYL), and 459 to 479 (ILIF…NPLI).

Belongs to the complex I subunit 2 family. NDH-1 is composed of 13 different subunits. Subunits NuoA, H, J, K, L, M, N constitute the membrane sector of the complex.

It is found in the cell membrane. It catalyses the reaction a quinone + NADH + 5 H(+)(in) = a quinol + NAD(+) + 4 H(+)(out). Its function is as follows. NDH-1 shuttles electrons from NADH, via FMN and iron-sulfur (Fe-S) centers, to quinones in the respiratory chain. The immediate electron acceptor for the enzyme in this species is believed to be ubiquinone. Couples the redox reaction to proton translocation (for every two electrons transferred, four hydrogen ions are translocated across the cytoplasmic membrane), and thus conserves the redox energy in a proton gradient. This Buchnera aphidicola subsp. Schizaphis graminum (strain Sg) protein is NADH-quinone oxidoreductase subunit N.